We begin with the raw amino-acid sequence, 185 residues long: Ribosome-recycling factor (185 aa).

The protein belongs to the RRF family.

It is found in the cytoplasm. Responsible for the release of ribosomes from messenger RNA at the termination of protein biosynthesis. May increase the efficiency of translation by recycling ribosomes from one round of translation to another. This Mycobacterium leprae (strain Br4923) protein is Ribosome-recycling factor.